The following is a 191-amino-acid chain: Phosphoheptose isomerase (191 aa).

The 158-residue stretch at 34-191 (IATALKDGNK…LVEEMVCERS (158 aa)) folds into the SIS domain. 49-51 (NGG) is a substrate binding site. Residues H58 and E62 each contribute to the Zn(2+) site. Residues E62, 91–92 (ND), 117–119 (TTS), S122, and Q169 each bind substrate. Residues Q169 and H177 each contribute to the Zn(2+) site.

This sequence belongs to the SIS family. GmhA subfamily. Zn(2+) is required as a cofactor.

It is found in the cytoplasm. The enzyme catalyses 2 D-sedoheptulose 7-phosphate = D-glycero-alpha-D-manno-heptose 7-phosphate + D-glycero-beta-D-manno-heptose 7-phosphate. It functions in the pathway carbohydrate biosynthesis; D-glycero-D-manno-heptose 7-phosphate biosynthesis; D-glycero-alpha-D-manno-heptose 7-phosphate and D-glycero-beta-D-manno-heptose 7-phosphate from sedoheptulose 7-phosphate: step 1/1. Its function is as follows. Catalyzes the isomerization of sedoheptulose 7-phosphate in D-glycero-D-manno-heptose 7-phosphate. This chain is Phosphoheptose isomerase, found in Aquifex aeolicus (strain VF5).